Consider the following 510-residue polypeptide: NAD(P)H-quinone oxidoreductase subunit 2 A, chloroplastic (510 aa).

Helical transmembrane passes span Leu-24 to Leu-44, Ile-57 to Phe-77, Ile-99 to Ile-119, Met-124 to Cys-144, Leu-149 to Tyr-169, Tyr-183 to Gly-203, Pro-227 to Ala-247, Trp-295 to Ile-315, Met-323 to Asp-343, Tyr-354 to Leu-374, Ala-395 to Phe-415, Leu-418 to Leu-438, and Met-484 to Ile-504.

The protein belongs to the complex I subunit 2 family. In terms of assembly, NDH is composed of at least 16 different subunits, 5 of which are encoded in the nucleus.

The protein localises to the plastid. It localises to the chloroplast thylakoid membrane. It catalyses the reaction a plastoquinone + NADH + (n+1) H(+)(in) = a plastoquinol + NAD(+) + n H(+)(out). It carries out the reaction a plastoquinone + NADPH + (n+1) H(+)(in) = a plastoquinol + NADP(+) + n H(+)(out). Functionally, NDH shuttles electrons from NAD(P)H:plastoquinone, via FMN and iron-sulfur (Fe-S) centers, to quinones in the photosynthetic chain and possibly in a chloroplast respiratory chain. The immediate electron acceptor for the enzyme in this species is believed to be plastoquinone. Couples the redox reaction to proton translocation, and thus conserves the redox energy in a proton gradient. The protein is NAD(P)H-quinone oxidoreductase subunit 2 A, chloroplastic of Solanum lycopersicum (Tomato).